The following is a 1616-amino-acid chain: S-layer-related protein (1616 aa).

A signal peptide spans 1–30 (MKSLLRKWNGMMIIALVISLLTPAWGKASA). Positions 1115–1185 (VKALKLDRGT…GSGTVQATYE (71 aa)) constitute a BIG2 domain. Disordered regions lie at residues 1191 to 1244 (ARVS…DGRN), 1372 to 1455 (NKRN…GRAR), 1523 to 1554 (ARGRFRNRGVPTRRGADTRTDERDAHARREAG), and 1585 to 1616 (FAGGGSRPAGRTRGRTLRARPARLPVRKARPC). A compositionally biased stretch (gly residues) spans 1199–1225 (STGGGSDTGSGTGSGSGGGSAGGGGTA). A compositionally biased stretch (basic residues) spans 1372 to 1387 (NKRNRRLRKLRPKNRK). A compositionally biased stretch (low complexity) spans 1406 to 1416 (PPECSASCPPA). The SLH domain occupies 1438-1502 (WSPPRSASPT…ALDPAPAAAD (65 aa)). The span at 1536 to 1554 (RGADTRTDERDAHARREAG) shows a compositional bias: basic and acidic residues. Residues 1594 to 1616 (GRTRGRTLRARPARLPVRKARPC) are compositionally biased toward basic residues.

Its subcellular location is the secreted. The protein localises to the cell wall. It is found in the S-layer. The S-layer is a paracrystalline mono-layered assembly of proteins which coats the surface of bacteria. May play a role in the export of butirosin from the organism. This chain is S-layer-related protein (butB), found in Niallia circulans (Bacillus circulans).